Consider the following 550-residue polypeptide: Zinc finger protein 382 (550 aa).

The interval 1–105 is mediates interaction with TRIM28; that stretch reads MPLQGSVSFK…RHSRPLIFIN (105 aa). 2 represses transcription regions span residues 5–46 and 70–211; these read GSVS…FVSV and IFPS…PEQP. The KRAB domain occupies 7–78; the sequence is VSFKDVTVDF…RIFPSYSYLE (72 aa). The C2H2-type 1; degenerate zinc-finger motif lies at 212–234; the sequence is FDHNECEKSFLMKGMLFTHTRAH. C2H2-type zinc fingers lie at residues 296-318, 324-346, 352-374, 380-402, 408-430, 436-458, 464-486, 492-514, and 520-542; these read FHCPYCGNNFRRKSYLIEHQRIH, YVCNQCGKAFRQKTALTLHEKTH, FICIDCGKSFRQKATLTRHHKTH, YECPQCGSAFRKKSYLIDHQRTH, YQCNECGKAFIQKTTLTVHQRTH, YICNECGKSFCQKTTLTLHQRIH, YICNECGKSFRQKAILTVHHRIH, NGCPQCGKAFSRKSNLIRHQKTH, and YECKQCGKFFSCKSNLIVHQKTH. The tract at residues 296–550 is required for transcriptional repression activity; probably mediates sequence-specific DNA-binding; sequence FHCPYCGNNF…THKVETTGIQ (255 aa).

Belongs to the krueppel C2H2-type zinc-finger protein family. As to quaternary structure, interacts with TRIM28; enhances the transcriptional repressor activity. In terms of tissue distribution, specifically expressed in heart with a weaker expression also detected in skeletal muscle.

It localises to the nucleus. Functionally, functions as a sequence-specific transcriptional repressor. This chain is Zinc finger protein 382 (ZNF382), found in Homo sapiens (Human).